Reading from the N-terminus, the 254-residue chain is TLC domain-containing protein At5g14285 (254 aa).

A run of 6 helical transmembrane segments spans residues 12-32, 45-65, 82-101, 124-144, 172-192, and 211-231; these read DLPI…FIVF, SCLI…RAVF, TVLD…YIVF, FLVF…EVTS, LSPP…PLFF, and WLWI…ILWI. A TLC domain is found at 38 to 248; the sequence is QIRPEASSCL…FSERKANKIR (211 aa).

Its subcellular location is the membrane. This is TLC domain-containing protein At5g14285 from Arabidopsis thaliana (Mouse-ear cress).